The sequence spans 315 residues: Taste receptor type 2 member 3 (315 aa).

Residues 1-5 are Extracellular-facing; that stretch reads MGLTE. A helical transmembrane segment spans residues 6-26; sequence GVFLILSGTQFTLGILVNCFI. Residues 27–41 lie on the Cytoplasmic side of the membrane; that stretch reads ELVNGSSWFKTKRMS. Residues 42-62 form a helical membrane-spanning segment; the sequence is LSDFIITTLALLRIILLCIIL. Residues 63-93 are Extracellular-facing; sequence TDSFLIEFSPNTHDSGIIMQIIDVSWTFTNH. Residues 94-114 form a helical membrane-spanning segment; it reads LSIWLATCLGVLYCLKIASFS. Residues 115–127 lie on the Cytoplasmic side of the membrane; it reads HPTFLWLKWRVSR. Residues 128–148 form a helical membrane-spanning segment; that stretch reads VMVWMLLGALLLSCGSTASLI. The Extracellular segment spans residues 149–185; that stretch reads NEFKLYSVFRGIEATRNVTEHFRKKRSEYYLIHVLGT. N-linked (GlcNAc...) asparagine glycosylation occurs at Asn165. A helical transmembrane segment spans residues 186–206; that stretch reads LWYLPPLIVSLASYSLLIFSL. Topologically, residues 207 to 233 are cytoplasmic; it reads GRHTRQMLQNGTSSRDPTTEAHKRAIR. A helical membrane pass occupies residues 234 to 254; sequence IILSFFFLFLLYFLAFLIASF. At 255-265 the chain is on the extracellular side; that stretch reads GNFLPKTKMAK. Residues 266-286 traverse the membrane as a helical segment; it reads MIGEVMTMFYPAGHSFILILG. Topologically, residues 287 to 315 are cytoplasmic; it reads NSKLKQTFVVMLRCESGHLKPGSKGPIFS.

It belongs to the G-protein coupled receptor T2R family.

It is found in the membrane. Its function is as follows. Gustducin-coupled receptor implicated in the perception of bitter compounds in the oral cavity and the gastrointestinal tract. Signals through PLCB2 and the calcium-regulated cation channel TRPM5. In Gorilla gorilla gorilla (Western lowland gorilla), this protein is Taste receptor type 2 member 3 (TAS2R3).